A 353-amino-acid polypeptide reads, in one-letter code: Small ribosomal subunit protein uS2 (353 aa).

Positions Asp-256–Ala-353 are disordered. 2 stretches are compositionally biased toward low complexity: residues Ala-263–Pro-311 and Glu-321–Glu-339. Acidic residues predominate over residues Ala-340–Ala-353.

Belongs to the universal ribosomal protein uS2 family.

This chain is Small ribosomal subunit protein uS2, found in Beutenbergia cavernae (strain ATCC BAA-8 / DSM 12333 / CCUG 43141 / JCM 11478 / NBRC 16432 / NCIMB 13614 / HKI 0122).